The following is a 336-amino-acid chain: Hdr-like menaquinol oxidoreductase cytochrome b-like subunit (336 aa).

The next 6 helical transmembrane spans lie at Ala-4 to Ile-24, Ile-60 to Phe-80, Trp-102 to Leu-122, Val-145 to Leu-165, His-184 to Ile-204, and Leu-232 to Phe-252.

It localises to the cell membrane. Has menaquinol-oxidizing activity. The HmeC and HmeD subunits may together mediate electron transfer from menaquinol to an unidentified electron acceptor on the cytoplasmic side of the membrane. This Archaeoglobus profundus (strain DSM 5631 / JCM 9629 / NBRC 100127 / Av18) protein is Hdr-like menaquinol oxidoreductase cytochrome b-like subunit (hmeC).